A 495-amino-acid polypeptide reads, in one-letter code: Glycerol kinase (495 aa).

Thr-12 contacts ADP. ATP contacts are provided by Thr-12, Thr-13, and Ser-14. Sn-glycerol 3-phosphate is bound at residue Thr-12. Position 16 (Arg-16) interacts with ADP. Sn-glycerol 3-phosphate is bound by residues Arg-82, Glu-83, Tyr-134, and Asp-243. Positions 82, 83, 134, 243, and 244 each coordinate glycerol. The ADP site is built by Thr-265 and Gly-308. Positions 265, 308, 312, and 409 each coordinate ATP. Residues Gly-409 and Asn-413 each coordinate ADP.

It belongs to the FGGY kinase family.

It carries out the reaction glycerol + ATP = sn-glycerol 3-phosphate + ADP + H(+). Its pathway is polyol metabolism; glycerol degradation via glycerol kinase pathway; sn-glycerol 3-phosphate from glycerol: step 1/1. Inhibited by fructose 1,6-bisphosphate (FBP). Its function is as follows. Key enzyme in the regulation of glycerol uptake and metabolism. Catalyzes the phosphorylation of glycerol to yield sn-glycerol 3-phosphate. The protein is Glycerol kinase of Ectopseudomonas mendocina (strain ymp) (Pseudomonas mendocina).